Here is a 201-residue protein sequence, read N- to C-terminus: Probable nicotinate-nucleotide adenylyltransferase (201 aa).

The protein belongs to the NadD family.

The catalysed reaction is nicotinate beta-D-ribonucleotide + ATP + H(+) = deamido-NAD(+) + diphosphate. It participates in cofactor biosynthesis; NAD(+) biosynthesis; deamido-NAD(+) from nicotinate D-ribonucleotide: step 1/1. Functionally, catalyzes the reversible adenylation of nicotinate mononucleotide (NaMN) to nicotinic acid adenine dinucleotide (NaAD). The sequence is that of Probable nicotinate-nucleotide adenylyltransferase from Clostridium botulinum (strain ATCC 19397 / Type A).